The chain runs to 362 residues: mRNA decay activator protein ZFP36L2 (362 aa).

A compositionally biased stretch (basic and acidic residues) spans 100 to 109; it reads SFSENGERSQ. The segment at 100-126 is disordered; sequence SFSENGERSQHLLHLQQQQQQKAGAQV. Low complexity predominate over residues 111 to 120; sequence LLHLQQQQQQ. Positions 130 to 135 match the RNA-binding motif; sequence RYKTEL. 2 consecutive C3H1-type zinc fingers follow at residues 130 to 158 and 168 to 196; these read RYKT…HGFH and KYKT…HNAE. Positions 147 to 188 are RNA-binding; it reads YGEKCQFAHGFHELRSLTRHPKYKTELCRTFHTIGFCPYGPR. 2 disordered regions span residues 225–244 and 306–362; these read DSPL…SSSS and SESP…ISDD. Over residues 327–346 the composition is skewed to low complexity; the sequence is YLSGSLSSGSLSGSDSPTLD.

Phosphorylated.

Its subcellular location is the nucleus. The protein localises to the cytoplasm. Functionally, zinc-finger RNA-binding protein that destabilizes several cytoplasmic AU-rich element (ARE)-containing mRNA transcripts by promoting their poly(A) tail removal or deadenylation, and hence provide a mechanism for attenuating protein synthesis. Acts as a 3'-untranslated region (UTR) ARE mRNA-binding adapter protein to communicate signaling events to the mRNA decay machinery. Functions by recruiting the CCR4-NOT deadenylase complex and probably other components of the cytoplasmic RNA decay machinery to the bound ARE-containing mRNAs, and hence promotes ARE-mediated mRNA deadenylation and decay processes. Binds to 3'-UTR ARE of numerous mRNAs. Also induces the degradation of ARE-containing mRNAs even in absence of poly(A) tail. Required for tubulogenesis during pronephros development. In Xenopus tropicalis (Western clawed frog), this protein is mRNA decay activator protein ZFP36L2 (zfp36l2).